Consider the following 45-residue polypeptide: Photosystem II reaction center protein K (45 aa).

Positions 1–8 (MFSINFLG) are excised as a propeptide. Residues 17–37 (FDPIVDVLPIIPLLFLLLAFV) form a helical membrane-spanning segment.

The protein belongs to the PsbK family. In terms of assembly, PSII is composed of 1 copy each of membrane proteins PsbA, PsbB, PsbC, PsbD, PsbE, PsbF, PsbH, PsbI, PsbJ, PsbK, PsbL, PsbM, PsbT, PsbY, PsbZ, Psb30/Ycf12, at least 3 peripheral proteins of the oxygen-evolving complex and a large number of cofactors. It forms dimeric complexes.

It localises to the plastid. The protein localises to the chloroplast thylakoid membrane. Functionally, one of the components of the core complex of photosystem II (PSII). PSII is a light-driven water:plastoquinone oxidoreductase that uses light energy to abstract electrons from H(2)O, generating O(2) and a proton gradient subsequently used for ATP formation. It consists of a core antenna complex that captures photons, and an electron transfer chain that converts photonic excitation into a charge separation. The protein is Photosystem II reaction center protein K of Euglena viridis (Cercaria viridis).